We begin with the raw amino-acid sequence, 125 residues long: Lectin (125 aa).

In terms of domain architecture, C-type lectin spans 1-120 (MDYEILFSDE…CGGARRVICE (120 aa)). 2 disulfides stabilise this stretch: Cys21/Cys119 and Cys96/Cys111.

Homodimer.

In terms of biological role, role in the defense system of the organism against microorganisms. This calcium-binding lectin binds galactose. The sequence is that of Lectin from Polyandrocarpa misakiensis (Tunicate).